We begin with the raw amino-acid sequence, 382 residues long: Probable purine permease 4 (382 aa).

Transmembrane regions (helical) follow at residues 25–45, 62–82, 98–118, 121–141, 150–170, 185–205, 224–244, 260–280, 291–311, and 315–335; these read LTLL…SSLL, WVQS…HYVL, LIFS…FSWG, YLPV…TLIL, ITFS…LLAL, YFIG…YLPV, LVME…EGGF, TFYW…SFAA, ITGG…GVVA, and VFGG…SSYT. The EamA domain occupies 66 to 170; that stretch reads AGFPLLLILI…LTLSSVLLAL (105 aa). The interval 345-364 is disordered; that stretch reads EEKEKGEYSGVKTTEDSGEM.

Belongs to the purine permeases (TC 2.A.7.14) family.

It localises to the membrane. This chain is Probable purine permease 4 (PUP4), found in Arabidopsis thaliana (Mouse-ear cress).